The sequence spans 86 residues: Putative membrane protein insertion efficiency factor (86 aa).

This sequence belongs to the UPF0161 family.

The protein resides in the cell inner membrane. In terms of biological role, could be involved in insertion of integral membrane proteins into the membrane. This Cellvibrio japonicus (strain Ueda107) (Pseudomonas fluorescens subsp. cellulosa) protein is Putative membrane protein insertion efficiency factor.